A 228-amino-acid chain; its full sequence is HTH-type transcriptional activator FasR (228 aa).

The segment at 1–39 (MSDLAKTAQRRALRSSGSARPDEDVPAPNRRGNRLPRDE) is disordered. The HTH tetR-type domain maps to 38–98 (DERRGQLLVV…AVLHRHVENL (61 aa)). Positions 61–80 (GMDEIADRAGVSKPVLYQHF) form a DNA-binding region, H-T-H motif.

As to quaternary structure, homodimer.

Its activity is regulated as follows. FasR:DNA binding is regulated by long-chain acyl-CoAs (C14- to C26-CoA), which act as effector molecules that modulate the affinity of FasR for its DNA binding sequences and therefore modulate the expression of the essential fas-acpS operon. FasR activity is not affected by mycolic acid biosynthesis intermediates. Transcriptional activator that plays a central role in sensing mycobacterial long-chain fatty acids and regulating lipid biosynthesis. Activates the expression of the genes encoding the fatty acid synthase (fas) and the 4-phosphopantetheinyl transferase (acpS), whose products are involved in the fatty acid and mycolic acid biosynthesis. Specifically binds to three conserved operator sequences present in the fas-acpS promoter region. Not essential for M.tuberculosis viability, although it is required for the optimal growth in vitro and for virulence in macrophages and in a mouse model of infection. The chain is HTH-type transcriptional activator FasR from Mycobacterium tuberculosis (strain ATCC 25618 / H37Rv).